Consider the following 830-residue polypeptide: Dimethylglycine oxidase (830 aa).

Residues 14–15, 35–36, 45–48, L52, and V174 each bind FAD; these read IV, DQ, and STSH. H48 carries the post-translational modification Pros-8alpha-FAD histidine. Residues H225 and Y259 contribute to the active site. FAD-binding positions include Y259 and 360 to 363; that span reads VWVT. Y539 is a binding site for (6S)-5,6,7,8-tetrahydrofolate. The For 5,10-methylenetetrahydrofolate synthesis activity role is filled by D552. Residues T554, G566, and 658–660 each bind (6S)-5,6,7,8-tetrahydrofolate; that span reads ELY.

It belongs to the GcvT family. Requires FAD as cofactor.

It carries out the reaction N,N-dimethylglycine + O2 + H2O = sarcosine + formaldehyde + H2O2. The enzyme catalyses N,N-dimethylglycine + (6S)-5,6,7,8-tetrahydrofolate + O2 = sarcosine + (6R)-5,10-methylene-5,6,7,8-tetrahydrofolate + H2O2. Its function is as follows. Catalyzes the oxidative demethylation of N,N-dimethylglycine to yield sarcosine, formaldehyde and hydrogen peroxide. The oxidation of dimethylglycine is coupled to the synthesis of 5,10-methylenetetrahydrofolate through an unusual substrate channeling mechanism. This channeling occurs by nonbiased diffusion of the iminium intermediate through a large solvent cavity connecting active site 1 (N-terminus) and active site 2 (C-terminus). The synthesis of 5,10-methylenetetrahydrofolate (at active site 2) prevents the accumulation of formaldehyde, formed by hydrolysis of the iminium intermediate product (at active site 1). Does not oxidize sarcosine. The chain is Dimethylglycine oxidase (dmg) from Arthrobacter globiformis.